Here is a 514-residue protein sequence, read N- to C-terminus: 2,3-bisphosphoglycerate-independent phosphoglycerate mutase (514 aa).

Mn(2+)-binding residues include Asp-14 and Ser-64. The active-site Phosphoserine intermediate is Ser-64. Substrate contacts are provided by residues His-125, 155–156, Arg-187, Arg-193, 263–266, and Lys-336; these read RD and RADR. The Mn(2+) site is built by Asp-403, His-407, Asp-444, His-445, and His-463.

The protein belongs to the BPG-independent phosphoglycerate mutase family. Monomer. Mn(2+) is required as a cofactor.

The catalysed reaction is (2R)-2-phosphoglycerate = (2R)-3-phosphoglycerate. It participates in carbohydrate degradation; glycolysis; pyruvate from D-glyceraldehyde 3-phosphate: step 3/5. In terms of biological role, catalyzes the interconversion of 2-phosphoglycerate and 3-phosphoglycerate. The polypeptide is 2,3-bisphosphoglycerate-independent phosphoglycerate mutase (Salmonella paratyphi A (strain ATCC 9150 / SARB42)).